The following is a 503-amino-acid chain: Probable cytosol aminopeptidase (503 aa).

Lys-268 and Asp-273 together coordinate Mn(2+). Residue Lys-280 is part of the active site. Mn(2+) contacts are provided by Asp-291, Asp-350, and Glu-352. Arg-354 is an active-site residue.

The protein belongs to the peptidase M17 family. Mn(2+) is required as a cofactor.

It is found in the cytoplasm. It catalyses the reaction Release of an N-terminal amino acid, Xaa-|-Yaa-, in which Xaa is preferably Leu, but may be other amino acids including Pro although not Arg or Lys, and Yaa may be Pro. Amino acid amides and methyl esters are also readily hydrolyzed, but rates on arylamides are exceedingly low.. It carries out the reaction Release of an N-terminal amino acid, preferentially leucine, but not glutamic or aspartic acids.. Presumably involved in the processing and regular turnover of intracellular proteins. Catalyzes the removal of unsubstituted N-terminal amino acids from various peptides. The chain is Probable cytosol aminopeptidase from Methylobacterium radiotolerans (strain ATCC 27329 / DSM 1819 / JCM 2831 / NBRC 15690 / NCIMB 10815 / 0-1).